The following is a 258-amino-acid chain: Acyl-[acyl-carrier-protein]--UDP-N-acetylglucosamine O-acyltransferase (258 aa).

It belongs to the transferase hexapeptide repeat family. LpxA subfamily. As to quaternary structure, homotrimer.

Its subcellular location is the cytoplasm. The catalysed reaction is a (3R)-hydroxyacyl-[ACP] + UDP-N-acetyl-alpha-D-glucosamine = a UDP-3-O-[(3R)-3-hydroxyacyl]-N-acetyl-alpha-D-glucosamine + holo-[ACP]. Its pathway is glycolipid biosynthesis; lipid IV(A) biosynthesis; lipid IV(A) from (3R)-3-hydroxytetradecanoyl-[acyl-carrier-protein] and UDP-N-acetyl-alpha-D-glucosamine: step 1/6. Functionally, involved in the biosynthesis of lipid A, a phosphorylated glycolipid that anchors the lipopolysaccharide to the outer membrane of the cell. The sequence is that of Acyl-[acyl-carrier-protein]--UDP-N-acetylglucosamine O-acyltransferase from Pseudomonas putida (strain ATCC 47054 / DSM 6125 / CFBP 8728 / NCIMB 11950 / KT2440).